Consider the following 312-residue polypeptide: Malate dehydrogenase (312 aa).

Residues 12–17 (GAGFTG) and Asp-36 contribute to the NAD(+) site. Substrate contacts are provided by Arg-87 and Arg-93. NAD(+) is bound by residues Asn-100 and 123-125 (LTN). Substrate is bound at residue Asn-125. At Ser-149 the chain carries Phosphoserine. Arg-156 lines the substrate pocket. Catalysis depends on His-180, which acts as the Proton acceptor.

The protein belongs to the LDH/MDH superfamily. MDH type 3 family.

The catalysed reaction is (S)-malate + NAD(+) = oxaloacetate + NADH + H(+). Functionally, catalyzes the reversible oxidation of malate to oxaloacetate. This chain is Malate dehydrogenase, found in Geobacillus thermodenitrificans.